The sequence spans 2045 residues: Non-reducing polyketide synthase pks27 (2045 aa).

Residues 10-247 are N-terminal acylcarrier protein transacylase domain (SAT); sequence IVFGDLTCDS…LTIPIYAPYH (238 aa). Residues 380–813 form the Ketosynthase family 3 (KS3) domain; that stretch reads HSKLAIIGYS…GGNSSVLIED (434 aa). Catalysis depends on for beta-ketoacyl synthase activity residues cysteine 552, histidine 687, and histidine 731. The segment at 913–1213 is malonyl-CoA:ACP transacylase (MAT) domain; that stretch reads FAFTGQGSQY…VPTLQRNKDT (301 aa). The N-terminal hotdog fold stretch occupies residues 1289–1422; it reads HKLVEEKKDG…ASITFPDAKA (134 aa). Residues 1289-1599 form the PKS/mFAS DH domain; that stretch reads HKLVEEKKDG…AQGVPRRLMD (311 aa). Histidine 1321 functions as the Proton acceptor; for dehydratase activity in the catalytic mechanism. Positions 1442-1599 are C-terminal hotdog fold; that stretch reads AARLNTDDRV…AQGVPRRLMD (158 aa). Catalysis depends on aspartate 1511, which acts as the Proton donor; for dehydratase activity. The segment at 1612 to 1636 is disordered; that stretch reads APAGGTLNASQSAAANPAADPSAQA. Residues 1619 to 1636 are compositionally biased toward low complexity; it reads NASQSAAANPAADPSAQA. One can recognise a Carrier domain in the interval 1635–1712; sequence QADSDNWQAA…ELEAFWKQGA (78 aa). Positions 1640–1709 are product template (PT) domain; the sequence is NWQAALKIIS…TIKELEAFWK (70 aa). O-(pantetheine 4'-phosphoryl)serine is present on serine 1672. A disordered region spans residues 1735 to 1776; it reads EAEVDQDKNSSDEDRSSLGTSSYEVISPNTTETTPEITKTSS. The span at 1739–1750 shows a compositional bias: basic and acidic residues; the sequence is DQDKNSSDEDRS. Over residues 1760–1776 the composition is skewed to low complexity; sequence ISPNTTETTPEITKTSS. The segment at 1798–2039 is thioesterase; that stretch reads TLFLLPDGSG…AKRLSEMIEG (242 aa).

Pantetheine 4'-phosphate serves as cofactor.

It functions in the pathway secondary metabolite biosynthesis. Non-reducing polyketide synthase (NRPKS); part of the gene cluster 27 that mediates the biosynthesis of asparasone A, a sclerotium-specific anthraquinone pigment important for sclerotial survival. Catalyzes the formation of the aromatic polyketide from acetyl coenzyme A and seven malonyl coenzyme A molecules. Through its product template (PT) domain, catalyzes the cyclization of polyketide backbone via C6-C11 aldolcondensation. The chain is Non-reducing polyketide synthase pks27 from Aspergillus flavus (strain ATCC 200026 / FGSC A1120 / IAM 13836 / NRRL 3357 / JCM 12722 / SRRC 167).